The following is a 395-amino-acid chain: Flagellin D (395 aa).

Belongs to the bacterial flagellin family.

It localises to the secreted. It is found in the bacterial flagellum. Functionally, flagellin is the subunit protein which polymerizes to form the filaments of bacterial flagella. This is Flagellin D (flaD) from Rhizobium meliloti (Ensifer meliloti).